Reading from the N-terminus, the 329-residue chain is GTPase Obg (329 aa).

Residues 1–159 form the Obg domain; that stretch reads MQFIDQARIT…WPLQLELKLL (159 aa). An OBG-type G domain is found at 160–328; sequence AEVGIIGLPN…LLDQVWQLLG (169 aa). ATP is bound by residues 166–173, 191–195, 213–216, 280–283, and 309–311; these read GLPNAGKS, FTTLV, DIPG, NKLE, and SAV. Mg(2+) contacts are provided by Ser173 and Thr193.

The protein belongs to the TRAFAC class OBG-HflX-like GTPase superfamily. OBG GTPase family. In terms of assembly, monomer. The cofactor is Mg(2+).

Its subcellular location is the cytoplasm. In terms of biological role, an essential GTPase which binds GTP, GDP and possibly (p)ppGpp with moderate affinity, with high nucleotide exchange rates and a fairly low GTP hydrolysis rate. Plays a role in control of the cell cycle, stress response, ribosome biogenesis and in those bacteria that undergo differentiation, in morphogenesis control. The polypeptide is GTPase Obg (Synechococcus sp. (strain WH7803)).